We begin with the raw amino-acid sequence, 364 residues long: Alanine racemase (364 aa).

The active-site Proton acceptor; specific for D-alanine is the K34. The residue at position 34 (K34) is an N6-(pyridoxal phosphate)lysine. R129 lines the substrate pocket. Y259 acts as the Proton acceptor; specific for L-alanine in catalysis. Residue M307 coordinates substrate.

It belongs to the alanine racemase family. Requires pyridoxal 5'-phosphate as cofactor.

The catalysed reaction is L-alanine = D-alanine. It functions in the pathway amino-acid biosynthesis; D-alanine biosynthesis; D-alanine from L-alanine: step 1/1. Catalyzes the interconversion of L-alanine and D-alanine. May also act on other amino acids. The sequence is that of Alanine racemase (alr) from Coxiella burnetii (strain RSA 331 / Henzerling II).